The following is a 638-amino-acid chain: Epithelial sodium channel subunit beta (638 aa).

Topologically, residues 1-50 (MPVKKYLLKCLHRLQKGPGYTYKELLVWYCNNTNTHGPKRIICEGPKKKA) are cytoplasmic. The chain crosses the membrane as a helical span at residues 51–71 (MWFLLTLLFACLVCWQWGVFI). Over 72 to 530 (QTYLSWEVSV…GGQFGFWMGG (459 aa)) the chain is Extracellular. 9 cysteine pairs are disulfide-bonded: Cys-98-Cys-270, Cys-182-Cys-187, Cys-194-Cys-201, Cys-247-Cys-254, Cys-359-Cys-446, Cys-384-Cys-442, Cys-388-Cys-438, Cys-397-Cys-424, and Cys-399-Cys-413. Residues Asn-135 and Asn-141 are each glycosylated (N-linked (GlcNAc...) asparagine). N-linked (GlcNAc...) asparagine glycosylation is present at Asn-205. The chain crosses the membrane as a helical span at residues 531–551 (SVLCLIEFGEIIIDFIWITII). Residues 552–638 (KLVASCKGLR…MESDSEVEAI (87 aa)) lie on the Cytoplasmic side of the membrane. Residues 594–620 (SCRPHGEVYPDQQTLPIPGTPPPNYDS) form a disordered region. The PY motif; recruits WW domain-containing proteins and is thereby required for ubiquitination and inhibition of the channel by NEDD4 and NEDD4L signature appears at 614–618 (PPPNY). Phosphoserine is present on residues Ser-631 and Ser-633.

This sequence belongs to the amiloride-sensitive sodium channel (TC 1.A.6) family. SCNN1B subfamily. Component of the heterotrimeric epithelial sodium channel (ENaC) composed of an alpha/SCNN1A, a beta/SCNN1B and a gamma/SCNN1G subunit. Interacts with WWP1 (via WW domains). Interacts with WWP2 (via WW domains); inhibits the channel. Interacts with the full-length immature form of PCSK9 (pro-PCSK9). Interacts (N-glycosylated) with BPIFA1; the interaction is direct and inhibits the proteolytic processing of SCNN1A and SCNN1G and the activation of ENaC. Ubiquitinated. Can be ubiquitinated at multiple sites and undergo monoubiquitination and polyubiquitination. Ubiquitination by NEDD4 or NEDD4L inhibits the ENaC channel through endocytosis, intracellular retention and degradation of its individual subunits. However, some studies could not confirm the ubiquitination of this subunit of the ENaC. In terms of processing, N-glycosylated. N-glycosylation is required for interaction with BPIFA1. Post-translationally, phosphorylated on serine and threonine residues. Aldosterone and insulin increase the basal level of phosphorylation. Lung and kidney.

Its subcellular location is the apical cell membrane. It is found in the cytoplasmic vesicle membrane. The catalysed reaction is Na(+)(in) = Na(+)(out). Originally identified and characterized by its inhibition by the diuretic drug amiloride. In terms of biological role, this is one of the three pore-forming subunits of the heterotrimeric epithelial sodium channel (ENaC), a critical regulator of sodium balance and fluid homeostasis. ENaC operates in epithelial tissues, where it mediates the electrodiffusion of sodium ions from extracellular fluid through the apical membrane of cells, with water following osmotically. It plays a key role in maintaining sodium homeostasis through electrogenic sodium reabsorption in the kidneys. This subunit is not essential for ENaC function in airway surface liquid homeostasis and proper mucus clearance. In Mus musculus (Mouse), this protein is Epithelial sodium channel subunit beta.